The following is a 252-amino-acid chain: 4-hydroxy-tetrahydrodipicolinate reductase (252 aa).

NAD(+) is bound by residues G8–M13, C85–T87, and S109–M112. The active-site Proton donor/acceptor is H142. H143 is a (S)-2,3,4,5-tetrahydrodipicolinate binding site. K146 serves as the catalytic Proton donor. G152–T153 lines the (S)-2,3,4,5-tetrahydrodipicolinate pocket.

This sequence belongs to the DapB family.

Its subcellular location is the cytoplasm. It carries out the reaction (S)-2,3,4,5-tetrahydrodipicolinate + NAD(+) + H2O = (2S,4S)-4-hydroxy-2,3,4,5-tetrahydrodipicolinate + NADH + H(+). It catalyses the reaction (S)-2,3,4,5-tetrahydrodipicolinate + NADP(+) + H2O = (2S,4S)-4-hydroxy-2,3,4,5-tetrahydrodipicolinate + NADPH + H(+). It functions in the pathway amino-acid biosynthesis; L-lysine biosynthesis via DAP pathway; (S)-tetrahydrodipicolinate from L-aspartate: step 4/4. Functionally, catalyzes the conversion of 4-hydroxy-tetrahydrodipicolinate (HTPA) to tetrahydrodipicolinate. This Clostridium novyi (strain NT) protein is 4-hydroxy-tetrahydrodipicolinate reductase.